The primary structure comprises 140 residues: Putative nickel-responsive regulator (140 aa).

Ni(2+) contacts are provided by H81, H92, H94, and C100.

This sequence belongs to the transcriptional regulatory CopG/NikR family. The cofactor is Ni(2+).

Functionally, transcriptional regulator. The protein is Putative nickel-responsive regulator of Methanothrix thermoacetophila (strain DSM 6194 / JCM 14653 / NBRC 101360 / PT) (Methanosaeta thermophila).